A 213-amino-acid chain; its full sequence is Pyrrolidone-carboxylate peptidase (213 aa).

Catalysis depends on residues Glu78, Cys141, and His165.

It belongs to the peptidase C15 family. Homotetramer.

It is found in the cytoplasm. It carries out the reaction Release of an N-terminal pyroglutamyl group from a polypeptide, the second amino acid generally not being Pro.. Removes 5-oxoproline from various penultimate amino acid residues except L-proline. The sequence is that of Pyrrolidone-carboxylate peptidase from Staphylococcus carnosus (strain TM300).